Consider the following 400-residue polypeptide: Queuine tRNA-ribosyltransferase catalytic subunit (400 aa).

Asp89 functions as the Proton acceptor in the catalytic mechanism. Substrate contacts are provided by residues 89–93 (DSGGF), Asp143, Gln185, and Gly212. An RNA binding region spans residues 243-249 (GVGFPVD). Asp262 (nucleophile) is an active-site residue. An RNA binding; important for wobble base 34 recognition region spans residues 267-271 (TRTAR). Zn(2+)-binding residues include Cys301, Cys303, Cys306, and His331.

This sequence belongs to the queuine tRNA-ribosyltransferase family. As to quaternary structure, heterodimer of a catalytic subunit and an accessory subunit. Requires Zn(2+) as cofactor.

The protein resides in the cytoplasm. It carries out the reaction guanosine(34) in tRNA + queuine = queuosine(34) in tRNA + guanine. Functionally, catalytic subunit of the queuine tRNA-ribosyltransferase (TGT) that catalyzes the base-exchange of a guanine (G) residue with queuine (Q) at position 34 (anticodon wobble position) in tRNAs with GU(N) anticodons (tRNA-Asp, -Asn, -His and -Tyr), resulting in the hypermodified nucleoside queuosine (7-(((4,5-cis-dihydroxy-2-cyclopenten-1-yl)amino)methyl)-7-deazaguanosine). Catalysis occurs through a double-displacement mechanism. The nucleophile active site attacks the C1' of nucleotide 34 to detach the guanine base from the RNA, forming a covalent enzyme-RNA intermediate. The proton acceptor active site deprotonates the incoming queuine, allowing a nucleophilic attack on the C1' of the ribose to form the product. The polypeptide is Queuine tRNA-ribosyltransferase catalytic subunit (Caenorhabditis briggsae).